The chain runs to 229 residues: Dihydrofolate reductase (229 aa).

Positions 11–227 (SITAVVAATA…VKYIFEMWVL (217 aa)) constitute a DHFR domain. Residues alanine 17 and 23-29 (GIGLNGG) contribute to the NADP(+) site. Residue 37-42 (EMKYFA) coordinates substrate. NADP(+) is bound at residue 64 to 66 (RKT). Arginine 80 lines the substrate pocket. NADP(+) is bound by residues 86-88 (SGK) and 127-134 (GGATLYTS).

It belongs to the dihydrofolate reductase family. As to quaternary structure, monomer.

The enzyme catalyses (6S)-5,6,7,8-tetrahydrofolate + NADP(+) = 7,8-dihydrofolate + NADPH + H(+). Its pathway is cofactor biosynthesis; tetrahydrofolate biosynthesis; 5,6,7,8-tetrahydrofolate from 7,8-dihydrofolate: step 1/1. In terms of biological role, key enzyme in folate metabolism. Catalyzes an essential reaction for de novo glycine and purine synthesis, and for DNA precursor synthesis. The polypeptide is Dihydrofolate reductase (DFR1) (Cryptococcus neoformans var. neoformans serotype D (strain JEC21 / ATCC MYA-565) (Filobasidiella neoformans)).